Reading from the N-terminus, the 210-residue chain is MARRSQGTKLHLAVLCLVVSCHAIGLSDLMERASQRSDKLHSLSTSLNKDLDSHFPPMGRVMMPRPSMCHTSSLQIPKDKEQALRVSENELISLARSLLLAWNDPLLLLSSEAPTLPHPSNGDISSKIRELQDYSKSLGDGLDILVNKMGPSSQYISSIPFKGGDLGNDKTSRLINFHFLMSCFRRDSHKIDSFLKVLRCRATKMRPETC.

The signal sequence occupies residues 1-23 (MARRSQGTKLHLAVLCLVVSCHA). Cystine bridges form between Cys-69-Cys-183 and Cys-200-Cys-210.

This sequence belongs to the somatotropin/prolactin family.

The protein resides in the secreted. The chain is Prolactin-2 (prl2) from Oncorhynchus keta (Chum salmon).